The primary structure comprises 357 residues: Putative minor fimbrial subunit PmfE (357 aa).

Positions 1-28 are cleaved as a signal peptide; the sequence is MILNKKNIHSKSVMLFCAGIVSLMPLHA.

It is found in the fimbrium. This is Putative minor fimbrial subunit PmfE (pmfE) from Proteus mirabilis (strain HI4320).